Consider the following 79-residue polypeptide: UPF0154 protein lwe1321 (79 aa).

A helical transmembrane segment spans residues Trp2–Ile22. The segment covering Lys57–Asn66 has biased composition (polar residues). A disordered region spans residues Lys57–Lys79.

The protein belongs to the UPF0154 family.

It is found in the cell membrane. In Listeria welshimeri serovar 6b (strain ATCC 35897 / DSM 20650 / CCUG 15529 / CIP 8149 / NCTC 11857 / SLCC 5334 / V8), this protein is UPF0154 protein lwe1321.